We begin with the raw amino-acid sequence, 433 residues long: ATP-dependent protease ATPase subunit HslU (433 aa).

Residues Val18, 60–65, Asp246, Glu311, and Arg383 each bind ATP; that span reads GVGKTE.

The protein belongs to the ClpX chaperone family. HslU subfamily. A double ring-shaped homohexamer of HslV is capped on each side by a ring-shaped HslU homohexamer. The assembly of the HslU/HslV complex is dependent on binding of ATP.

The protein localises to the cytoplasm. Functionally, ATPase subunit of a proteasome-like degradation complex; this subunit has chaperone activity. The binding of ATP and its subsequent hydrolysis by HslU are essential for unfolding of protein substrates subsequently hydrolyzed by HslV. HslU recognizes the N-terminal part of its protein substrates and unfolds these before they are guided to HslV for hydrolysis. This is ATP-dependent protease ATPase subunit HslU from Rhodopseudomonas palustris (strain ATCC BAA-98 / CGA009).